We begin with the raw amino-acid sequence, 275 residues long: Small ribosomal subunit protein uS3 (275 aa).

The KH type-2 domain occupies 38-106 (IRRMMTSGME…QVQLNILEVK (69 aa)). Residues 216 to 228 (NAAARAGNRPARG) are compositionally biased toward low complexity. The disordered stretch occupies residues 216–275 (NAAARAGNRPARGGADRPARGGRGGERGGRGRKPQQAPAAEAPKAEAPAAAPAESTGTEA). Over residues 229–244 (GADRPARGGRGGERGG) the composition is skewed to basic and acidic residues. A compositionally biased stretch (low complexity) spans 249-268 (PQQAPAAEAPKAEAPAAAPA).

Belongs to the universal ribosomal protein uS3 family. As to quaternary structure, part of the 30S ribosomal subunit. Forms a tight complex with proteins S10 and S14.

Functionally, binds the lower part of the 30S subunit head. Binds mRNA in the 70S ribosome, positioning it for translation. This Streptomyces avermitilis (strain ATCC 31267 / DSM 46492 / JCM 5070 / NBRC 14893 / NCIMB 12804 / NRRL 8165 / MA-4680) protein is Small ribosomal subunit protein uS3.